The following is a 79-amino-acid chain: Cyclin-dependent kinases regulatory subunit 2 (79 aa).

K4 bears the N6-acetyllysine mark.

This sequence belongs to the CKS family. As to quaternary structure, forms a homohexamer that can probably bind six kinase subunits.

In terms of biological role, binds to the catalytic subunit of the cyclin dependent kinases and is essential for their biological function. The protein is Cyclin-dependent kinases regulatory subunit 2 (CKS2) of Bos taurus (Bovine).